Consider the following 390-residue polypeptide: Exodeoxyribonuclease 7 large subunit (390 aa).

Belongs to the XseA family. As to quaternary structure, heterooligomer composed of large and small subunits.

Its subcellular location is the cytoplasm. It catalyses the reaction Exonucleolytic cleavage in either 5'- to 3'- or 3'- to 5'-direction to yield nucleoside 5'-phosphates.. Its function is as follows. Bidirectionally degrades single-stranded DNA into large acid-insoluble oligonucleotides, which are then degraded further into small acid-soluble oligonucleotides. The chain is Exodeoxyribonuclease 7 large subunit from Synechococcus sp. (strain CC9311).